Consider the following 701-residue polypeptide: MARTTPIERYRNIGISAHIDAGKTTTTERVLFYTGVSHKIGEVHDGAATMDWMEQEQERGITITSAATTAFWSGMGKQFQPHRINIIDTPGHVDFTIEVERSMRVLDGAVMVYCAVGGVQPQSETVWRQANKYKVPRIAFVNKMDRTGANFLRCVEHIKTRLKGNPVPLQLNIGSEENFKGVIDLVKMKAINWSEADQGVSFDYEDVPAELLEKAQEMRMTLVEAAAEASEDLMEKYLGGEELTEEEIKKALRQRVLNNEIILVTCGSAFKNKGVQAMLDAVVDYLPAPTDVAAIDGLKLDGETKDERHASDDEPFAALAFKIATDPFVGNLTFFRVYSGVVNSGDSVLNSVKEKRERFGRIVQMHANKREEIKEVRAGDIAAAIGLKDVTTGDTLCDEKAPIILERMEFPEPVISIAVEPKTKADQEKMGLALGRLAQEDPSFRVWTDEESGQTIIAGMGELHLDIIVDRMRREFKVEANVGKPQVAYRETIRNTVKDIEGKHAKQSGGRGQYGHVVIDMYPLEEGKAYEFVNDIKGGVIPGEFIPGVDKGIREQLKSGPLAGYPVMDLGVRLHFGSYHDVDSSELAFKIAASMAFKAGFMKANPVLLEPIMKVEVETPEDYMGDVIGDLNRRRGLIEGMEDGPSGKIVRALVPLAEMFGYATALRSATQGRASYAMEFAKYHDAPTNVAQAVIEERKSK.

One can recognise a tr-type G domain in the interval 8–290 (ERYRNIGISA…AVVDYLPAPT (283 aa)). Residues 17–24 (AHIDAGKT), 88–92 (DTPGH), and 142–145 (NKMD) contribute to the GTP site.

Belongs to the TRAFAC class translation factor GTPase superfamily. Classic translation factor GTPase family. EF-G/EF-2 subfamily.

It localises to the cytoplasm. Functionally, catalyzes the GTP-dependent ribosomal translocation step during translation elongation. During this step, the ribosome changes from the pre-translocational (PRE) to the post-translocational (POST) state as the newly formed A-site-bound peptidyl-tRNA and P-site-bound deacylated tRNA move to the P and E sites, respectively. Catalyzes the coordinated movement of the two tRNA molecules, the mRNA and conformational changes in the ribosome. The protein is Elongation factor G of Aeromonas hydrophila subsp. hydrophila (strain ATCC 7966 / DSM 30187 / BCRC 13018 / CCUG 14551 / JCM 1027 / KCTC 2358 / NCIMB 9240 / NCTC 8049).